The primary structure comprises 754 residues: Probable beta-glucosidase D (754 aa).

An N-terminal signal peptide occupies residues Met1–Ser20. N-linked (GlcNAc...) asparagine glycosylation is found at Asn66, Asn69, and Asn186. Positions Asn186 to Asn206 are disordered. A compositionally biased stretch (gly residues) spans Thr188–Ser198. A glycan (N-linked (GlcNAc...) asparagine) is linked at Asn239. Asp267 is a catalytic residue. N-linked (GlcNAc...) asparagine glycans are attached at residues Asn301, Asn345, Asn443, Asn512, Asn534, Asn573, Asn588, Asn655, and Asn745.

It belongs to the glycosyl hydrolase 3 family.

The protein localises to the secreted. The catalysed reaction is Hydrolysis of terminal, non-reducing beta-D-glucosyl residues with release of beta-D-glucose.. It participates in glycan metabolism; cellulose degradation. Functionally, beta-glucosidases are one of a number of cellulolytic enzymes involved in the degradation of cellulosic biomass. Catalyzes the last step releasing glucose from the inhibitory cellobiose. The sequence is that of Probable beta-glucosidase D (bglD) from Aspergillus niger (strain ATCC MYA-4892 / CBS 513.88 / FGSC A1513).